The following is a 387-amino-acid chain: Exodeoxyribonuclease 7 large subunit (387 aa).

It belongs to the XseA family. Heterooligomer composed of large and small subunits.

Its subcellular location is the cytoplasm. It catalyses the reaction Exonucleolytic cleavage in either 5'- to 3'- or 3'- to 5'-direction to yield nucleoside 5'-phosphates.. In terms of biological role, bidirectionally degrades single-stranded DNA into large acid-insoluble oligonucleotides, which are then degraded further into small acid-soluble oligonucleotides. The chain is Exodeoxyribonuclease 7 large subunit from Campylobacter hominis (strain ATCC BAA-381 / DSM 21671 / CCUG 45161 / LMG 19568 / NCTC 13146 / CH001A).